We begin with the raw amino-acid sequence, 689 residues long: Glycine--tRNA ligase beta subunit (689 aa).

This sequence belongs to the class-II aminoacyl-tRNA synthetase family. As to quaternary structure, tetramer of two alpha and two beta subunits.

It localises to the cytoplasm. The enzyme catalyses tRNA(Gly) + glycine + ATP = glycyl-tRNA(Gly) + AMP + diphosphate. The sequence is that of Glycine--tRNA ligase beta subunit from Desulforapulum autotrophicum (strain ATCC 43914 / DSM 3382 / VKM B-1955 / HRM2) (Desulfobacterium autotrophicum).